We begin with the raw amino-acid sequence, 200 residues long: Pyridoxal 5'-phosphate synthase subunit PdxT (200 aa).

An L-glutamine-binding site is contributed by 52 to 54; sequence GES. Cysteine 84 acts as the Nucleophile in catalysis. L-glutamine-binding positions include arginine 116 and 145–146; that span reads IR. Catalysis depends on charge relay system residues histidine 181 and glutamate 183.

The protein belongs to the glutaminase PdxT/SNO family. As to quaternary structure, in the presence of PdxS, forms a dodecamer of heterodimers. Only shows activity in the heterodimer.

The catalysed reaction is aldehydo-D-ribose 5-phosphate + D-glyceraldehyde 3-phosphate + L-glutamine = pyridoxal 5'-phosphate + L-glutamate + phosphate + 3 H2O + H(+). The enzyme catalyses L-glutamine + H2O = L-glutamate + NH4(+). It functions in the pathway cofactor biosynthesis; pyridoxal 5'-phosphate biosynthesis. In terms of biological role, catalyzes the hydrolysis of glutamine to glutamate and ammonia as part of the biosynthesis of pyridoxal 5'-phosphate. The resulting ammonia molecule is channeled to the active site of PdxS. The polypeptide is Pyridoxal 5'-phosphate synthase subunit PdxT (Sulfurisphaera tokodaii (strain DSM 16993 / JCM 10545 / NBRC 100140 / 7) (Sulfolobus tokodaii)).